Here is a 566-residue protein sequence, read N- to C-terminus: MIDFKEKLVDLISQEINDLNVEEIEHLIEIPPQPEMGDYALPCFKFAGIFKKAPNIIAEEIASKIEGNSYFSKVVNTGPYVNFFINKEIFAETVLEEILQKGKYYGARNIGKGKNVIVEFSSPNIAKPFHIGHIRTTVIGHALRNIYNFLGYNAIAINHLGDYGTQFGKLIVALNKWGDKDKIKSNPIPEFLKLYIKFHEEAEKNPELEEKARSWFNRLENKDEEAMDLWKWIRNMSLKEFKRVYDMLGIDFDSYAGESFYSDMMPDVIEEMEEKGLLQESQGAKIVDLEEYNMPPAMIEKSDGSTLYITRDIAAAIYRKKTYNFYKNIYVVGSQQKLHFDQWFKIIELMGHEWARDCIHVPFGMVSLEDGTMSTRKGRVVFLEDVLNKAIEKTKETIEDKNPDLENKEEVAKIVGIGAVIFQELYNSRIKDYVFSWDRTLSFEGETGPYVQYTYVRTKSVLNKSNYKFKKLDDYSLLTDEDAFNVIKLISQFPDTIIKASERYEPSIITRHITELAKAFNKYYHDNQILVDDQKVREARLFLVYAVNTVLKTGLSLLGIKTPEKM.

A 'HIGH' region motif is present at residues 123–133; it reads PNIAKPFHIGH.

This sequence belongs to the class-I aminoacyl-tRNA synthetase family. As to quaternary structure, monomer.

Its subcellular location is the cytoplasm. It carries out the reaction tRNA(Arg) + L-arginine + ATP = L-arginyl-tRNA(Arg) + AMP + diphosphate. This chain is Arginine--tRNA ligase, found in Halothermothrix orenii (strain H 168 / OCM 544 / DSM 9562).